The following is a 484-amino-acid chain: Calcium-dependent protein kinase 26 (484 aa).

Positions 24–282 constitute a Protein kinase domain; that stretch reads YSLGHKLGQG…AHQVLRHPWI (259 aa). ATP contacts are provided by residues 30–38 and Lys-53; that span reads LGQGQFGTT. The Proton acceptor role is filled by Asp-148. Ser-188 is modified (phosphoserine). An autoinhibitory domain region spans residues 288–318; sequence APDRALDPAVLSRLKQFSAMNKLKQMALRVI. EF-hand domains are found at residues 325–360, 361–396, 397–432, and 436–466; these read EEIA…YGST, LKDT…LNKL, EREE…QGMS, and LEDV…GIVG. Asp-338, Asp-340, Ser-342, Glu-349, Asp-374, Asp-376, Ser-378, Thr-380, Glu-385, Asp-410, Asp-412, Ser-414, Tyr-416, Glu-421, Asp-444, Asp-446, Asp-448, Arg-450, and Glu-455 together coordinate Ca(2+).

The protein belongs to the protein kinase superfamily. Ser/Thr protein kinase family. CDPK subfamily.

It catalyses the reaction L-seryl-[protein] + ATP = O-phospho-L-seryl-[protein] + ADP + H(+). It carries out the reaction L-threonyl-[protein] + ATP = O-phospho-L-threonyl-[protein] + ADP + H(+). Activated by calcium. Autophosphorylation may play an important role in the regulation of the kinase activity. May play a role in signal transduction pathways that involve calcium as a second messenger. The chain is Calcium-dependent protein kinase 26 (CPK26) from Arabidopsis thaliana (Mouse-ear cress).